A 238-amino-acid chain; its full sequence is Endothelin-3 (238 aa).

An N-terminal signal peptide occupies residues 1-16 (MEPGLWLLFGLTVTSA). Positions 17–94 (AGFVPCSQSG…AEGAPEHHRS (78 aa)) are excised as a propeptide. The disordered stretch occupies residues 24-89 (QSGDAGRRGV…GQEQAAEGAP (66 aa)). Disulfide bonds link Cys-97-Cys-111 and Cys-99-Cys-107. A propeptide spanning residues 118–238 (INTPEQTVPY…PRCLFQEGAP (121 aa)) is cleaved from the precursor. The interval 159-173 (CACVGRYDKACLHFC) is endothelin-like. A disordered region spans residues 183 to 219 (SRTAEKTDKEEEGKVEVKDQQSKQALDLHHPKLMPGS). Positions 185 to 212 (TAEKTDKEEEGKVEVKDQQSKQALDLHH) are enriched in basic and acidic residues.

It belongs to the endothelin/sarafotoxin family. Expressed in trophoblasts and placental stem villi vessels, but not in cultured placental smooth muscle cells.

The protein localises to the secreted. In terms of biological role, endothelins are endothelium-derived vasoconstrictor peptides. The chain is Endothelin-3 (EDN3) from Homo sapiens (Human).